A 211-amino-acid chain; its full sequence is Methylthioribulose-1-phosphate dehydratase (211 aa).

2 residues coordinate Zn(2+): His97 and His99.

It belongs to the aldolase class II family. MtnB subfamily. As to quaternary structure, homotetramer. Requires Zn(2+) as cofactor.

It catalyses the reaction 5-(methylsulfanyl)-D-ribulose 1-phosphate = 5-methylsulfanyl-2,3-dioxopentyl phosphate + H2O. Its pathway is amino-acid biosynthesis; L-methionine biosynthesis via salvage pathway; L-methionine from S-methyl-5-thio-alpha-D-ribose 1-phosphate: step 2/6. Functionally, catalyzes the dehydration of methylthioribulose-1-phosphate (MTRu-1-P) into 2,3-diketo-5-methylthiopentyl-1-phosphate (DK-MTP-1-P). The protein is Methylthioribulose-1-phosphate dehydratase of Geobacillus thermodenitrificans (strain NG80-2).